Consider the following 220-residue polypeptide: Ribosomal RNA large subunit methyltransferase E (220 aa).

S-adenosyl-L-methionine-binding residues include glycine 60, tryptophan 62, aspartate 92, aspartate 108, and aspartate 133. The active-site Proton acceptor is lysine 173. Residues arginine 197–arginine 220 form a disordered region.

Belongs to the class I-like SAM-binding methyltransferase superfamily. RNA methyltransferase RlmE family.

It localises to the cytoplasm. It catalyses the reaction uridine(2552) in 23S rRNA + S-adenosyl-L-methionine = 2'-O-methyluridine(2552) in 23S rRNA + S-adenosyl-L-homocysteine + H(+). Its function is as follows. Specifically methylates the uridine in position 2552 of 23S rRNA at the 2'-O position of the ribose in the fully assembled 50S ribosomal subunit. This Burkholderia ambifaria (strain ATCC BAA-244 / DSM 16087 / CCUG 44356 / LMG 19182 / AMMD) (Burkholderia cepacia (strain AMMD)) protein is Ribosomal RNA large subunit methyltransferase E.